The chain runs to 63 residues: DNA-directed RNA polymerase 7 kDa subunit (63 aa).

This sequence belongs to the poxviridae DNA-directed RNA polymerase 7 kDa subunit family. As to quaternary structure, the DNA-dependent RNA polymerase used for intermediate and late genes expression consists of eight subunits 147 kDa, 133 kDa, 35 kDa, 30 kDa, 22 kDa, 19 kDa, 18 kDa and 7 kDa totalling more than 500 kDa in mass. The same holoenzyme, with the addition of the transcription-specificity factor RAP94, is used for early gene expression.

Its subcellular location is the virion. The enzyme catalyses RNA(n) + a ribonucleoside 5'-triphosphate = RNA(n+1) + diphosphate. In terms of biological role, part of the DNA-dependent RNA polymerase which catalyzes the transcription of viral DNA into RNA using the four ribonucleoside triphosphates as substrates. Responsible for the transcription of early, intermediate and late genes. DNA-dependent RNA polymerase associates with the early transcription factor (ETF) thereby allowing the early genes transcription. Late transcription, and probably also intermediate transcription, require newly synthesized RNA polymerase. This chain is DNA-directed RNA polymerase 7 kDa subunit (RPO7), found in Myxoma virus (strain Lausanne) (MYXV).